Here is a 206-residue protein sequence, read N- to C-terminus: Small ribosomal subunit protein uS4B (206 aa).

Positions 96–156 constitute an S4 RNA-binding domain; it reads GRLDNVVYRM…EKAKKQSRIG (61 aa).

This sequence belongs to the universal ribosomal protein uS4 family. Part of the 30S ribosomal subunit. Contacts protein S5. The interaction surface between S4 and S5 is involved in control of translational fidelity.

Its function is as follows. One of the primary rRNA binding proteins, it binds directly to 16S rRNA where it nucleates assembly of the body of the 30S subunit. With S5 and S12 plays an important role in translational accuracy. This Psychromonas ingrahamii (strain DSM 17664 / CCUG 51855 / 37) protein is Small ribosomal subunit protein uS4B.